The sequence spans 378 residues: Metalloendoproteinase 2-MMP (378 aa).

Positions 1–20 are cleaved as a signal peptide; it reads MRFCVFGFLSLFLIVSPASA. The propeptide at 21–154 is activation peptide; the sequence is WFFPNSTAVP…SRTHLHAVKR (134 aa). 5 N-linked (GlcNAc...) asparagine glycosylation sites follow: asparagine 25, asparagine 35, asparagine 46, asparagine 79, and asparagine 102. The short motif at 118 to 125 is the Cysteine switch element; that stretch reads PRCGNPDV. Cysteine 120 lines the Zn(2+) pocket. 3 N-linked (GlcNAc...) asparagine glycosylation sites follow: asparagine 127, asparagine 143, and asparagine 203. Histidine 280 is a Zn(2+) binding site. The active site involves glutamate 281. Histidine 284 and histidine 290 together coordinate Zn(2+). Asparagine 330 is a glycosylation site (N-linked (GlcNAc...) asparagine). Serine 349 carries GPI-anchor amidated serine lipidation. Residues 350–378 constitute a propeptide, removed in mature form; it reads AAWRIDGSSRSTIVSLLLSTVGLVLWFLP.

This sequence belongs to the peptidase M10A family. Matrix metalloproteinases (MMPs) subfamily. Zn(2+) is required as a cofactor. As to expression, mostly expressed in roots, and, to a lower extent, in flowers, leaves and stems.

The protein resides in the cell membrane. Repressed by acetohydroxamic acid (AHA). Its function is as follows. Matrix metalloproteinases (MMPs) or matrixins may play a role in the degradation and remodeling of the extracellular matrix (ECM) during development or in response to stresses. Required for plant growth, morphogenesis, and development with particular relevance for flowering and senescence. Active on McaPLGLDpaAR-NH(2) (QF24) and myelin basic protein (MBP) and, to some extent, on beta-casein. The chain is Metalloendoproteinase 2-MMP from Arabidopsis thaliana (Mouse-ear cress).